Here is a 389-residue protein sequence, read N- to C-terminus: S-adenosylmethionine synthase (389 aa).

ATP is bound at residue histidine 15. Aspartate 17 contacts Mg(2+). Residue glutamate 43 participates in K(+) binding. 2 residues coordinate L-methionine: glutamate 56 and glutamine 99. Residues 99–109 (QSPDIAQGVNE) are flexible loop. Residues 166-168 (DAK), 234-235 (RF), aspartate 243, 249-250 (RK), alanine 266, and lysine 270 contribute to the ATP site. Aspartate 243 is a binding site for L-methionine. Lysine 274 is a binding site for L-methionine.

The protein belongs to the AdoMet synthase family. Homotetramer; dimer of dimers. Requires Mg(2+) as cofactor. The cofactor is K(+).

The protein localises to the cytoplasm. The enzyme catalyses L-methionine + ATP + H2O = S-adenosyl-L-methionine + phosphate + diphosphate. It functions in the pathway amino-acid biosynthesis; S-adenosyl-L-methionine biosynthesis; S-adenosyl-L-methionine from L-methionine: step 1/1. Its function is as follows. Catalyzes the formation of S-adenosylmethionine (AdoMet) from methionine and ATP. The overall synthetic reaction is composed of two sequential steps, AdoMet formation and the subsequent tripolyphosphate hydrolysis which occurs prior to release of AdoMet from the enzyme. The sequence is that of S-adenosylmethionine synthase from Neisseria meningitidis serogroup A / serotype 4A (strain DSM 15465 / Z2491).